A 498-amino-acid polypeptide reads, in one-letter code: Excisase C (498 aa).

The region spanning 263–446 (KIIYSFDLFE…FGIENRKKAF (184 aa)) is the Tyr recombinase domain. Active-site residues include arginine 306, lysine 336, arginine 401, and histidine 424. Tyrosine 433 acts as the O-(3'-phospho-DNA)-tyrosine intermediate in catalysis.

The protein belongs to the XisA/XisC recombinase family.

Functionally, essential for DNA excision. Site specific recombinase necessary for the excision of the 10.5 kb hupL element during heterocyst differentiation. This chain is Excisase C (xisC), found in Nostoc sp. (strain PCC 7120 / SAG 25.82 / UTEX 2576).